The chain runs to 66 residues: Large ribosomal subunit protein bL31 (66 aa).

4 residues coordinate Zn(2+): Cys16, Cys18, Cys36, and Cys39.

Belongs to the bacterial ribosomal protein bL31 family. Type A subfamily. As to quaternary structure, part of the 50S ribosomal subunit. The cofactor is Zn(2+).

Its function is as follows. Binds the 23S rRNA. The polypeptide is Large ribosomal subunit protein bL31 (Sulfurovum sp. (strain NBC37-1)).